We begin with the raw amino-acid sequence, 514 residues long: NAD(P)H-quinone oxidoreductase subunit 2 (514 aa).

A run of 14 helical transmembrane segments spans residues 16–36, 43–63, 80–100, 110–130, 133–153, 168–188, 211–231, 245–265, 279–299, 307–327, 335–355, 379–399, 411–431, and 467–487; these read IWPE…DLIV, WLPY…YFEW, LSIV…LMSV, LAEF…LSGA, LVMI…MTGY, LLIG…LYGL, LGLA…ISAV, PTPV…ALAI, WHFI…VVAL, MLAY…TANS, IFYL…IILF, LGLS…GFFG, GLYG…YYYI, and VGLV…NPLF.

It belongs to the complex I subunit 2 family. NDH-1 can be composed of about 15 different subunits; different subcomplexes with different compositions have been identified which probably have different functions.

It is found in the cellular thylakoid membrane. It carries out the reaction a plastoquinone + NADH + (n+1) H(+)(in) = a plastoquinol + NAD(+) + n H(+)(out). The catalysed reaction is a plastoquinone + NADPH + (n+1) H(+)(in) = a plastoquinol + NADP(+) + n H(+)(out). NDH-1 shuttles electrons from an unknown electron donor, via FMN and iron-sulfur (Fe-S) centers, to quinones in the respiratory and/or the photosynthetic chain. The immediate electron acceptor for the enzyme in this species is believed to be plastoquinone. Couples the redox reaction to proton translocation, and thus conserves the redox energy in a proton gradient. Cyanobacterial NDH-1 also plays a role in inorganic carbon-concentration. This chain is NAD(P)H-quinone oxidoreductase subunit 2, found in Gloeothece citriformis (strain PCC 7424) (Cyanothece sp. (strain PCC 7424)).